Here is a 221-residue protein sequence, read N- to C-terminus: Cutinase 3 (221 aa).

The signal sequence occupies residues 1 to 17 (MRFHTILLAALASLVIA). Intrachain disulfides connect Cys44/Cys122 and Cys70/Cys84. The Nucleophile role is filled by Ser133. Cys184 and Cys191 are joined by a disulfide. Residue Asp188 is part of the active site. His201 (proton donor/acceptor) is an active-site residue.

The protein belongs to the cutinase family.

The protein resides in the secreted. The enzyme catalyses cutin + H2O = cutin monomers.. Catalyzes the hydrolysis of complex carboxylic polyesters found in the cell wall of plants. Degrades cutin, a macromolecule that forms the structure of the plant cuticle. Also degrades suberin, a specialized macromolecule found in the cell wall of various plant tissues. This Emericella nidulans (strain FGSC A4 / ATCC 38163 / CBS 112.46 / NRRL 194 / M139) (Aspergillus nidulans) protein is Cutinase 3.